Here is a 446-residue protein sequence, read N- to C-terminus: Amino-acid acetyltransferase (446 aa).

One can recognise an N-acetyltransferase domain in the interval 299–431; sequence EQVRDAEIDD…SHLPMKKQKL (133 aa).

The protein belongs to the acetyltransferase family. ArgA subfamily.

It localises to the cytoplasm. The catalysed reaction is L-glutamate + acetyl-CoA = N-acetyl-L-glutamate + CoA + H(+). It participates in amino-acid biosynthesis; L-arginine biosynthesis; N(2)-acetyl-L-ornithine from L-glutamate: step 1/4. In Aliivibrio fischeri (strain MJ11) (Vibrio fischeri), this protein is Amino-acid acetyltransferase.